An 843-amino-acid chain; its full sequence is Translation initiation factor IF-2 (843 aa).

Residues 198 to 219 (YKREEEEKKSKAKKAGGKGFKK) form a disordered region. A compositionally biased stretch (basic residues) spans 207-219 (SKAKKAGGKGFKK). Positions 345-512 (SRAPVVTIMG…AVLLQSEVLE (168 aa)) constitute a tr-type G domain. The segment at 354-361 (GHVDHGKT) is G1. Position 354–361 (354–361 (GHVDHGKT)) interacts with GTP. The G2 stretch occupies residues 379-383 (GITQH). Residues 400 to 403 (DTPG) form a G3 region. GTP-binding positions include 400 to 404 (DTPGH) and 454 to 457 (NKID). The segment at 454–457 (NKID) is G4. Residues 490–492 (SAK) are G5.

Belongs to the TRAFAC class translation factor GTPase superfamily. Classic translation factor GTPase family. IF-2 subfamily.

The protein resides in the cytoplasm. One of the essential components for the initiation of protein synthesis. Protects formylmethionyl-tRNA from spontaneous hydrolysis and promotes its binding to the 30S ribosomal subunits. Also involved in the hydrolysis of GTP during the formation of the 70S ribosomal complex. This is Translation initiation factor IF-2 from Francisella tularensis subsp. tularensis (strain WY96-3418).